We begin with the raw amino-acid sequence, 86 residues long: Anti-adapter protein IraP (86 aa).

Residues methionine 1–arginine 38 adopt a coiled-coil conformation.

This sequence belongs to the IraP family. Interacts with RssB.

The protein localises to the cytoplasm. Functionally, inhibits RpoS proteolysis by regulating RssB activity, thereby increasing the stability of the sigma stress factor RpoS especially during phosphate starvation, but also in stationary phase and during nitrogen starvation. Its effect on RpoS stability is due to its interaction with RssB, which probably blocks the interaction of RssB with RpoS, and the consequent delivery of the RssB-RpoS complex to the ClpXP protein degradation pathway. The protein is Anti-adapter protein IraP of Klebsiella pneumoniae (strain 342).